The primary structure comprises 264 residues: Short-chain dehydrogenase/reductase ucsE (264 aa).

The chain crosses the membrane as a helical span at residues 13-32 (LVVVVGGTSGLGFAVAQAAV). NADP(+)-binding residues include leucine 23, serine 43, and aspartate 74. Residue asparagine 125 is glycosylated (N-linked (GlcNAc...) asparagine). NADP(+)-binding residues include arginine 130 and lysine 139. The active-site Proton donor is serine 157. Residues valine 202 and threonine 204 each coordinate NADP(+).

It belongs to the short-chain dehydrogenases/reductases (SDR) family. The cofactor is NADP(+).

Its subcellular location is the membrane. The protein operates within mycotoxin biosynthesis. In terms of biological role, short-chain dehydrogenase/reductase; part of the gene cluster that mediates the biosynthesis of UCS1025A, a member of the pyrrolizidinone family that acts as a strong telomerase inhibitor and displays potent antibacterial and antitumor properties. These compounds share a hemiaminal-containing pyrrolizidinone core fused with a gamma-lactone, giving a furopyrrolizidine that is connected to a decalin fragment. The polyketide synthase module (PKS) of the PKS-NRPS ucsA is responsible for the synthesis of the polyketide backbone via the condensation of an acetyl-CoA starter unit with 6 malonyl-CoA units. The downstream nonribosomal peptide synthetase (NRPS) module then amidates the carboxyl end of the polyketide with a 2S,3S-methylproline derived from L-isoleucine by the 2-oxoglutarate-dependent dioxygenase ucsF which converts L-isoleucine to (4S,5S)-4-methylpyrroline-5-carboxylate that is further converted to 2S,3S-methylproline by the pyrroline-5-carboxylate reductase ucsG. Reductive release of the completed aminoacyl polyketide from the assembly line can form the 3-pyrrolin-2-one structure via an intramolecular Knoevenagel reaction. Because ucsA lacks a designated enoylreductase (ER) domain, the required activity is provided the enoyl reductase ucsL. This keto acyclic precursor is the substrate of the Diels-Alderase ucsH, that catalyzes the Diels-Alder cycloaddition. Oxidation of the 3S-methyl group to a carboxylate by the cytochrome P450 monooxygenase ucsK allows an oxa-Michael cyclization that might involve the reductase/dehydrogenase ucsI and which furnishes the furopyrrolizidine. The oxidase ucsJ likely plays a critical role in stereoselective reduction of the C5-C6 double bond to afford the required R-configured carboxylate group. Further enolization and oxidation at C5 by an unidentified enzyme affords the last intermediate that can undergo oxa-Michael cyclization to yield UCS1025A. In Acremonium sp, this protein is Short-chain dehydrogenase/reductase ucsE.